The sequence spans 126 residues: Fluoride-specific ion channel FluC (126 aa).

Helical transmembrane passes span 35–55 (WWTL…IGLL), 71–91 (VGML…WLLF), and 101–121 (LYVV…MILI). Gly-75 and Thr-78 together coordinate Na(+).

It belongs to the fluoride channel Fluc/FEX (TC 1.A.43) family.

The protein localises to the cell inner membrane. The enzyme catalyses fluoride(in) = fluoride(out). Its activity is regulated as follows. Na(+) is not transported, but it plays an essential structural role and its presence is essential for fluoride channel function. In terms of biological role, fluoride-specific ion channel. Important for reducing fluoride concentration in the cell, thus reducing its toxicity. The polypeptide is Fluoride-specific ion channel FluC (Sphingopyxis alaskensis (strain DSM 13593 / LMG 18877 / RB2256) (Sphingomonas alaskensis)).